Here is a 418-residue protein sequence, read N- to C-terminus: MFKDISIKDFDPVLAEAMAAESVRQENHIELIASENYCSQAVMEAQGTDLTNKYAEGYPGKRYYGGCEHVDVVEQLAIDRAKELFGAEYVNVQPHSGSQANSAVFLALLEANDTVLGMSLDAGGHLTHGAHINFSGLNYNAVQYGLVEGTGLIDYDQVESLAKEHKPKMIIAGFSAYSQVVDWARFREIADEVGAYLLVDMAHVAGLIAGGVYPSPVPFADVVTTTTHKTLRGPRSGMILARDEVLAKKLNSAVFPGNQGGPLMHVIAAKAVCFKEALEENFKTYQQQVVKNAQAMAKVIQDRGYEIISGGTENHLMLISLVKQEMTGKEADKWLGDAHITVNKNAVPNDPKSPFVTSGIRIGTPAITTRGFNEAQAGDLAGWICDVLDSRGDEAVTAEVRGKVEAICKELPVYAKNQ.

Residues leucine 120 and 124–126 (GHL) each bind (6S)-5,6,7,8-tetrahydrofolate. The residue at position 229 (lysine 229) is an N6-(pyridoxal phosphate)lysine. 353–355 (SPF) provides a ligand contact to (6S)-5,6,7,8-tetrahydrofolate.

The protein belongs to the SHMT family. As to quaternary structure, homodimer. Pyridoxal 5'-phosphate is required as a cofactor.

The protein resides in the cytoplasm. It carries out the reaction (6R)-5,10-methylene-5,6,7,8-tetrahydrofolate + glycine + H2O = (6S)-5,6,7,8-tetrahydrofolate + L-serine. It functions in the pathway one-carbon metabolism; tetrahydrofolate interconversion. Its pathway is amino-acid biosynthesis; glycine biosynthesis; glycine from L-serine: step 1/1. Its function is as follows. Catalyzes the reversible interconversion of serine and glycine with tetrahydrofolate (THF) serving as the one-carbon carrier. This reaction serves as the major source of one-carbon groups required for the biosynthesis of purines, thymidylate, methionine, and other important biomolecules. Also exhibits THF-independent aldolase activity toward beta-hydroxyamino acids, producing glycine and aldehydes, via a retro-aldol mechanism. The chain is Serine hydroxymethyltransferase from Psychrobacter cryohalolentis (strain ATCC BAA-1226 / DSM 17306 / VKM B-2378 / K5).